Reading from the N-terminus, the 79-residue chain is Sulfur carrier protein TusA (79 aa).

C17 serves as the catalytic Cysteine persulfide intermediate.

It belongs to the sulfur carrier protein TusA family.

It is found in the cytoplasm. Sulfur carrier protein which probably makes part of a sulfur-relay system. The protein is Sulfur carrier protein TusA of Histophilus somni (strain 129Pt) (Haemophilus somnus).